A 174-amino-acid polypeptide reads, in one-letter code: ATP-dependent protease subunit HslV (174 aa).

T2 is an active-site residue. Na(+) is bound by residues G157, C160, and T163.

Belongs to the peptidase T1B family. HslV subfamily. A double ring-shaped homohexamer of HslV is capped on each side by a ring-shaped HslU homohexamer. The assembly of the HslU/HslV complex is dependent on binding of ATP.

It is found in the cytoplasm. The catalysed reaction is ATP-dependent cleavage of peptide bonds with broad specificity.. Allosterically activated by HslU binding. Functionally, protease subunit of a proteasome-like degradation complex believed to be a general protein degrading machinery. The protein is ATP-dependent protease subunit HslV of Shewanella loihica (strain ATCC BAA-1088 / PV-4).